A 132-amino-acid polypeptide reads, in one-letter code: Group 2 truncated hemoglobin YjbI (132 aa).

The heme site is built by Thr45, Lys48, Tyr63, and His76.

This sequence belongs to the truncated hemoglobin family. Group II subfamily. As to quaternary structure, monomer. Heme serves as cofactor.

Hemoglobin-like protein that exhibits a low peroxidase activity. Its very high oxygen affinity may rule out the possibility that it is involved in oxygen transport. The polypeptide is Group 2 truncated hemoglobin YjbI (yjbI) (Bacillus subtilis (strain 168)).